Here is a 104-residue protein sequence, read N- to C-terminus: MKRIKKGDEVIVIAGRSENKGKRGKVVAVKDDTVIIEGINQVSKHVRPNPQLGIEGGIVKKEAGIHISNVMLFNAETGKRDRVGFKIEDGVKFRYYKSTGKRID.

This sequence belongs to the universal ribosomal protein uL24 family. Part of the 50S ribosomal subunit.

One of two assembly initiator proteins, it binds directly to the 5'-end of the 23S rRNA, where it nucleates assembly of the 50S subunit. Functionally, one of the proteins that surrounds the polypeptide exit tunnel on the outside of the subunit. This is Large ribosomal subunit protein uL24 from Dichelobacter nodosus (strain VCS1703A).